A 469-amino-acid polypeptide reads, in one-letter code: Programmed cell death protein 4 (469 aa).

Met-1 is modified (N-acetylmethionine). 2 disordered regions span residues 1–38 (MDVENEQILNVNPADPDNLSDSLFSGDEENAGTEEIKN) and 58–128 (KAKR…GTPG). The residue at position 25 (Ser-25) is a Phosphoserine. The Nuclear localization signal signature appears at 58-64 (KAKRRLR). Position 67 is a phosphoserine; by PKB and RPS6KB1 (Ser-67). Phosphoserine occurs at positions 68, 71, 76, 78, 80, and 94. A Phosphodegron motif is present at residues 70–76 (DSGRGDS). Residues 74–83 (GDSVSDSGSD) show a composition bias toward low complexity. Residues 114-125 (KKGGAGGKGVWG) are compositionally biased toward gly residues. Tyr-152 is subject to Phosphotyrosine. Residues 163 to 284 (AFEKTLTPII…CNTYIDSYKG (122 aa)) enclose the MI 1 domain. The Nuclear localization signal motif lies at 241–250 (DKLLKDLPEL). Residues Ser-313 and Ser-317 each carry the phosphoserine modification. The MI 2 domain occupies 326 to 449 (HLVKEIDMLL…SKQLRDLCPS (124 aa)). Ser-457 bears the Phosphoserine; by PKB mark.

The protein belongs to the PDCD4 family. Interacts (via MI domains) with EIF4A2. Interacts (via MI domains) with EIF4A1 (via N-terminal domain). Heterotrimer with EIF4A1; one molecule of PDCD4 binds two molecules of EIF4A1. Interacts with EIF4G1. May form a complex with EIF4A1 and EIF4G1. The interaction between PDCD4 and EIF4A1 interferes with the interaction between EIF4A1 and EIF4G. When phosphorylated, interacts with BTRC and FBXW11. In terms of processing, polyubiquitinated, leading to its proteasomal degradation. Rapidly degraded in response to mitogens. Phosphorylation of the phosphodegron promotes interaction with BTRC and proteasomal degradation. Post-translationally, phosphorylated at Ser-67 by RPS6KB1 in response to mitogens; phosphorylation promotes proteasomal degradation of PDCD4. As to expression, up-regulated in proliferative cells. Highly expressed in epithelial cells of the mammary gland. Reduced expression in lung cancer and colon carcinoma.

It localises to the nucleus. It is found in the cytoplasm. Inhibits translation initiation and cap-dependent translation. May excert its function by hindering the interaction between EIF4A1 and EIF4G. Inhibits the helicase activity of EIF4A. Modulates the activation of JUN kinase. Down-regulates the expression of MAP4K1, thus inhibiting events important in driving invasion, namely, MAPK85 activation and consequent JUN-dependent transcription. May play a role in apoptosis. Tumor suppressor. Inhibits tumor promoter-induced neoplastic transformation. Binds RNA. The chain is Programmed cell death protein 4 (PDCD4) from Homo sapiens (Human).